A 1397-amino-acid chain; its full sequence is DNA-directed RNA polymerase subunit beta' (1397 aa).

4 residues coordinate Zn(2+): Cys-75, Cys-77, Cys-90, and Cys-93. Mg(2+)-binding residues include Asp-465, Asp-467, and Asp-469. Cys-819, Cys-893, Cys-900, and Cys-903 together coordinate Zn(2+).

This sequence belongs to the RNA polymerase beta' chain family. In terms of assembly, the RNAP catalytic core consists of 2 alpha, 1 beta, 1 beta' and 1 omega subunit. When a sigma factor is associated with the core the holoenzyme is formed, which can initiate transcription. Requires Mg(2+) as cofactor. Zn(2+) is required as a cofactor.

The catalysed reaction is RNA(n) + a ribonucleoside 5'-triphosphate = RNA(n+1) + diphosphate. Functionally, DNA-dependent RNA polymerase catalyzes the transcription of DNA into RNA using the four ribonucleoside triphosphates as substrates. The chain is DNA-directed RNA polymerase subunit beta' from Acinetobacter baumannii (strain SDF).